The chain runs to 146 residues: Meiotically up-regulated gene 151 protein (146 aa).

Residues 1-40 are disordered; it reads MSLVAYDSEEEEQTSLVNENNDIKGRSEEPHWKIPNSPKA. Positions 21 to 32 are enriched in basic and acidic residues; that stretch reads NDIKGRSEEPHW.

It localises to the nucleus. In terms of biological role, has a role in meiosis. This Schizosaccharomyces pombe (strain 972 / ATCC 24843) (Fission yeast) protein is Meiotically up-regulated gene 151 protein (mug151).